We begin with the raw amino-acid sequence, 716 residues long: Lamin-like protein (716 aa).

Basic residues-rich tracts occupy residues 1–10 and 35–45; these read MDMSKKKSKR and KKTKTTTKKKA. The segment at 1-107 is disordered; it reads MDMSKKKSKR…TIQSIPTTPI (107 aa). A compositionally biased stretch (low complexity) spans 62–107; that stretch reads ITTTTTSTSTTNNNNITTTSTSSQQSNGTLSSSSSPTIQSIPTTPI. Positions 130–450 form a coiled coil; sequence LREKDELSLI…KMRKQMADLK (321 aa). The IF rod domain maps to 132-515; that stretch reads EKDELSLIHN…ELVKGFEKTV (384 aa). The short motif at 519–522 is the Nuclear localization signal element; it reads KRKR. The interval 519-584 is disordered; sequence KRKRSKLQHE…PTGPEQSELF (66 aa). Residues 532-545 show a composition bias toward polar residues; the sequence is AANQDQNGMTIEEQ. Positions 546-564 are enriched in low complexity; that stretch reads SSTSTTTTTSATGSSSSTS. Polar residues predominate over residues 565–584; the sequence is HLDNIDSSKLPTGPEQSELF. Residues 575–698 form the LTD domain; sequence PTGPEQSELF…EETTTVTLPA (124 aa). A CAAX motif motif is present at residues 713 to 716; that stretch reads CLIM.

This sequence belongs to the intermediate filament family. As to quaternary structure, homodimer. Lamin dimers then assemble into dimeric head-to-tail polymers. Ultimately, two head-to-tail polymers assemble laterally into a protofilament with a uniformly shaped rod of 3.5 nm in diameter.

Its subcellular location is the nucleus lamina. It is found in the nucleus envelope. It localises to the nucleus inner membrane. In terms of biological role, lamins are intermediate filament proteins that assemble into a filamentous meshwork, and which constitute the major components of the nuclear lamina, a fibrous layer on the nucleoplasmic side of the inner nuclear membrane. Lamins provide a framework for the nuclear envelope, bridging the nuclear envelope and chromatin, thereby playing an important role in nuclear assembly, chromatin organization, nuclear membrane and telomere dynamics. The structural integrity of the lamina is strictly controlled by the cell cycle, as seen by the disintegration and formation of the nuclear envelope in prophase and telophase, respectively. Helps to maintain integrity of nuclear structures in response to mechanical stress. The protein is Lamin-like protein of Dictyostelium discoideum (Social amoeba).